Reading from the N-terminus, the 310-residue chain is 4-hydroxyproline 2-epimerase (310 aa).

Residue Cys88 is the Proton acceptor of the active site. Substrate contacts are provided by residues 89–90 (GH), His208, and Asp232. The active-site Proton donor is the Cys236. 237-238 (GT) is a substrate binding site.

This sequence belongs to the proline racemase family.

The enzyme catalyses trans-4-hydroxy-L-proline = cis-4-hydroxy-D-proline. In terms of biological role, catalyzes the epimerization of trans-4-hydroxy-L-proline (t4LHyp) to cis-4-hydroxy-D-proline (c4DHyp). Is likely involved in a degradation pathway that converts t4LHyp to alpha-ketoglutarate. Displays no proline racemase activity. The protein is 4-hydroxyproline 2-epimerase of Acinetobacter baumannii (strain AYE).